The sequence spans 550 residues: Mitochondrial distribution and morphology protein 12 (550 aa).

The SMP-LTD domain maps to 1 to 550; the sequence is MSIDLNWETV…VYPSYWTFLV (550 aa). Disordered regions lie at residues 76–97, 196–386, and 466–489; these read SDLASESGSEEDEEEIADDRRR, GHGH…KLRE, and ENEVDGGEGDKQTGFKSPPGGGNG. Positions 83 to 92 are enriched in acidic residues; that stretch reads GSEEDEEEIA. Pro residues predominate over residues 270 to 286; the sequence is PPFPPSSTGGPSPPPGL. Over residues 288–305 the composition is skewed to basic residues; that stretch reads KPHHPHHPHHHHAHHAHP. A compositionally biased stretch (basic and acidic residues) spans 327–344; sequence PTRDKTTPSHHPDPEDVH. A compositionally biased stretch (polar residues) spans 346 to 355; the sequence is PNTTTTNKQR. Low complexity predominate over residues 356–371; the sequence is STSPATSSPLATSAQE.

This sequence belongs to the MDM12 family. In terms of assembly, component of the ER-mitochondria encounter structure (ERMES) or MDM complex, composed of MMM1, MDM10, MDM12 and MDM34. An MMM1 homodimer associates with one molecule of MDM12 on each side in a pairwise head-to-tail manner, and the SMP-LTD domains of MMM1 and MDM12 generate a continuous hydrophobic tunnel for phospholipid trafficking.

It is found in the mitochondrion outer membrane. It localises to the endoplasmic reticulum membrane. Functionally, component of the ERMES/MDM complex, which serves as a molecular tether to connect the endoplasmic reticulum (ER) and mitochondria. Components of this complex are involved in the control of mitochondrial shape and protein biogenesis, and function in nonvesicular lipid trafficking between the ER and mitochondria. MDM12 is required for the interaction of the ER-resident membrane protein MMM1 and the outer mitochondrial membrane-resident beta-barrel protein MDM10. The MDM12-MMM1 subcomplex functions in the major beta-barrel assembly pathway that is responsible for biogenesis of all mitochondrial outer membrane beta-barrel proteins, and acts in a late step after the SAM complex. The MDM10-MDM12-MMM1 subcomplex further acts in the TOM40-specific pathway after the action of the MDM12-MMM1 complex. Essential for establishing and maintaining the structure of mitochondria and maintenance of mtDNA nucleoids. The protein is Mitochondrial distribution and morphology protein 12 of Podospora anserina (strain S / ATCC MYA-4624 / DSM 980 / FGSC 10383) (Pleurage anserina).